Here is a 300-residue protein sequence, read N- to C-terminus: MNQTYGRLVSRAAIAATAMASALLLIKIFAWWYTGSVSILAALVDSLVDIAASLTNLLVVRYSLQPADDEHTFGHGKAESLAALAQSMFISGSALFLFLTSIQNLIKPTPMNDPGVGIGVTVIALICTIILVTFQRWVVRKTQSQAVRADMLHYQSDVMMNGAILIALGLSWYGWHRADALFALGIGIYILYSALRMGYEAVQSLLDRALPDAERQEIIDIVTSWPGVSGAHDLRTRQSGPTRFIQIHLEMEDNLPLVQAHLVAEQVEQAILRRFPGSDVIIHQDPCSVVPTEGKKFELV.

The helical transmembrane segment at Leu-24–Val-44 threads the bilayer. 2 residues coordinate Zn(2+): Asp-45 and Asp-49. 2 consecutive transmembrane segments (helical) span residues Ala-82 to Ile-102 and Pro-114 to Phe-134. Zn(2+) is bound by residues His-153 and Asp-157. Helical transmembrane passes span Ser-156–His-176 and Ala-178–Gly-198.

This sequence belongs to the cation diffusion facilitator (CDF) transporter (TC 2.A.4) family. FieF subfamily. As to quaternary structure, homodimer.

Its subcellular location is the cell inner membrane. It carries out the reaction Zn(2+)(in) + H(+)(out) = Zn(2+)(out) + H(+)(in). It catalyses the reaction Cd(2+)(in) + H(+)(out) = Cd(2+)(out) + H(+)(in). The enzyme catalyses Fe(2+)(in) + H(+)(out) = Fe(2+)(out) + H(+)(in). Functionally, divalent metal cation transporter which exports Zn(2+), Cd(2+) and possibly Fe(2+). May be involved in zinc and iron detoxification by efflux. The protein is Cation-efflux pump FieF of Salmonella schwarzengrund (strain CVM19633).